The following is a 128-amino-acid chain: uncharacterized protein (128 aa).

The next 3 membrane-spanning stretches (helical) occupy residues methionine 1 to leucine 21, valine 51 to glycine 71, and alanine 76 to valine 96.

The protein resides in the membrane. This is an uncharacterized protein from Saccharomyces cerevisiae (strain ATCC 204508 / S288c) (Baker's yeast).